Consider the following 549-residue polypeptide: Copalyl diphosphate synthase (549 aa).

The short motif at 321–326 is the DXDDTA motif element; it reads DADDTA. Residues 451 to 457 carry the QXXDGSW motif motif; sequence QRDDGSW.

Belongs to the terpene synthase family. Mg(2+) is required as a cofactor.

The catalysed reaction is (2E,6E,10E)-geranylgeranyl diphosphate = (+)-copalyl diphosphate. In terms of biological role, involved in the biosynthesis of the labdane-type bicyclic diterpene labda-8(17),12(E),14-triene. Catalyzes the conversion of geranylgeranyl diphosphate (GGDP) into (+)-copalyl diphosphate. The polypeptide is Copalyl diphosphate synthase (Streptomyces anulatus (Streptomyces chrysomallus)).